The following is a 463-amino-acid chain: Glycine--tRNA ligase (463 aa).

Residues R98 and E174 each coordinate substrate. ATP contacts are provided by residues 206–208 (RNE), 216–221 (FRTREF), 290–291 (EL), and 334–337 (GADR). 221–225 (FEQME) provides a ligand contact to substrate. 330-334 (EPSLG) is a binding site for substrate.

Belongs to the class-II aminoacyl-tRNA synthetase family. As to quaternary structure, homodimer.

The protein resides in the cytoplasm. It catalyses the reaction tRNA(Gly) + glycine + ATP = glycyl-tRNA(Gly) + AMP + diphosphate. Functionally, catalyzes the attachment of glycine to tRNA(Gly). In Staphylococcus epidermidis (strain ATCC 35984 / DSM 28319 / BCRC 17069 / CCUG 31568 / BM 3577 / RP62A), this protein is Glycine--tRNA ligase.